We begin with the raw amino-acid sequence, 493 residues long: Glutamyl-tRNA(Gln) amidotransferase subunit A (493 aa).

Active-site charge relay system residues include Lys78 and Ser158. The active-site Acyl-ester intermediate is Ser182.

Belongs to the amidase family. GatA subfamily. Heterotrimer of A, B and C subunits.

The catalysed reaction is L-glutamyl-tRNA(Gln) + L-glutamine + ATP + H2O = L-glutaminyl-tRNA(Gln) + L-glutamate + ADP + phosphate + H(+). In terms of biological role, allows the formation of correctly charged Gln-tRNA(Gln) through the transamidation of misacylated Glu-tRNA(Gln) in organisms which lack glutaminyl-tRNA synthetase. The reaction takes place in the presence of glutamine and ATP through an activated gamma-phospho-Glu-tRNA(Gln). This is Glutamyl-tRNA(Gln) amidotransferase subunit A from Beijerinckia indica subsp. indica (strain ATCC 9039 / DSM 1715 / NCIMB 8712).